Here is a 366-residue protein sequence, read N- to C-terminus: Structure-specific endonuclease subunit SLX1 (366 aa).

Residues 14 to 95 form the GIY-YIG domain; it reads AFYCCYLLRS…QNTHATRHID (82 aa). 2 disordered regions span residues 31-59 and 102-124; these read IGST…SMQG and RAEE…KRPP. Positions 109–123 are enriched in basic residues; it reads GKKKATSPGRRRKRP. The SLX1-type zinc finger occupies 234 to 289; the sequence is CGVCKNPADMSSSLILVCPIEACQTVSHLSCLSNKFLTEGGELETLVPLEGTCPGC. Positions 317–366 are disordered; sequence KPKRKRKSDNPAESDAADGQALEQEDEELDETWMEDMSQDEEPSPVKKSR. Residues 339–359 show a composition bias toward acidic residues; that stretch reads EQEDEELDETWMEDMSQDEEP.

Belongs to the SLX1 family. As to quaternary structure, forms a heterodimer with SLX4. A divalent metal cation serves as cofactor.

The protein resides in the nucleus. Catalytic subunit of the SLX1-SLX4 structure-specific endonuclease that resolves DNA secondary structures generated during DNA repair and recombination. Has endonuclease activity towards branched DNA substrates, introducing single-strand cuts in duplex DNA close to junctions with ss-DNA. The polypeptide is Structure-specific endonuclease subunit SLX1 (Phaeosphaeria nodorum (strain SN15 / ATCC MYA-4574 / FGSC 10173) (Glume blotch fungus)).